A 178-amino-acid polypeptide reads, in one-letter code: Ribosome maturation factor RimP (178 aa).

This sequence belongs to the RimP family.

Its subcellular location is the cytoplasm. Its function is as follows. Required for maturation of 30S ribosomal subunits. In Streptococcus pyogenes serotype M5 (strain Manfredo), this protein is Ribosome maturation factor RimP.